The chain runs to 488 residues: Envelope glycoprotein gp62 (488 aa).

The first 20 residues, 1 to 20, serve as a signal peptide directing secretion; the sequence is MGKFLATLILFFQFCPLILG. Topologically, residues 21 to 442 are extracellular; the sequence is DYSPSCCTLT…LGLSQWAREA (422 aa). N140 and N222 each carry an N-linked (GlcNAc...) asparagine; by host glycan. The short motif at 225–228 is the CXXC element; it reads CIVC. 3 disulfide bridges follow: C225/C228, C225/C401, and C393/C400. N-linked (GlcNAc...) asparagine; by host glycosylation is found at N244 and N272. The segment at 313–333 is fusion peptide; the sequence is AVPVAVWLVSALAIGAGVAGG. 2 coiled-coil regions span residues 341-387 and 397-429; these read ASGK…LLFW and QEQCCFLNITNSHVSMLQERPPLENRVLTGWGL. The tract at residues 376 to 392 is immunosuppression; it reads AQNRRGLDLLFWEQGGL. The CX6CC motif lies at 393–401; sequence CKALQEQCC. The N-linked (GlcNAc...) asparagine; by host glycan is linked to N404. Residues 443–463 traverse the membrane as a helical segment; it reads LQTGITLVALLLLVILAGPCI. C462 is lipidated: S-palmitoyl cysteine; by host. Topologically, residues 464-488 are cytoplasmic; that stretch reads LRQLRHLPSRVRYPHYSLINPESSL.

The mature envelope protein (Env) consists of a trimer of SU-TM heterodimers attached by a labile interchain disulfide bond. Post-translationally, specific enzymatic cleavages in vivo yield mature proteins. Envelope glycoproteins are synthesized as an inactive precursor that is N-glycosylated and processed likely by host cell furin or by a furin-like protease in the Golgi to yield the mature SU and TM proteins. The cleavage site between SU and TM requires the minimal sequence [KR]-X-[KR]-R. In terms of processing, the CXXC motif is highly conserved across a broad range of retroviral envelope proteins. It is thought to participate in the formation of a labile disulfide bond possibly with the CX6CC motif present in the transmembrane protein. Isomerization of the intersubunit disulfide bond to an SU intrachain disulfide bond is thought to occur upon receptor recognition in order to allow membrane fusion. The transmembrane protein is palmitoylated.

The protein resides in the virion membrane. Its subcellular location is the host cell membrane. The surface protein (SU) attaches the virus to the host cell by binding to its receptor. This interaction triggers the refolding of the transmembrane protein (TM) and is thought to activate its fusogenic potential by unmasking its fusion peptide. Fusion occurs at the host cell plasma membrane. In terms of biological role, the transmembrane protein (TM) acts as a class I viral fusion protein. Under the current model, the protein has at least 3 conformational states: pre-fusion native state, pre-hairpin intermediate state, and post-fusion hairpin state. During viral and target cell membrane fusion, the coiled coil regions (heptad repeats) assume a trimer-of-hairpins structure, positioning the fusion peptide in close proximity to the C-terminal region of the ectodomain. The formation of this structure appears to drive apposition and subsequent fusion of viral and target cell membranes. Membranes fusion leads to delivery of the nucleocapsid into the cytoplasm. The chain is Envelope glycoprotein gp62 (env) from Human T-cell leukemia virus 1 (isolate Caribbea CH subtype A) (HTLV-1).